The sequence spans 558 residues: Dihydroxy-acid dehydratase (558 aa).

A Mg(2+)-binding site is contributed by Asp-78. Cys-119 contributes to the [2Fe-2S] cluster binding site. Positions 120 and 121 each coordinate Mg(2+). N6-carboxylysine is present on Lys-121. Cys-192 is a [2Fe-2S] cluster binding site. Residue Glu-446 coordinates Mg(2+). Ser-472 functions as the Proton acceptor in the catalytic mechanism.

This sequence belongs to the IlvD/Edd family. As to quaternary structure, homodimer. [2Fe-2S] cluster serves as cofactor. Requires Mg(2+) as cofactor.

The catalysed reaction is (2R)-2,3-dihydroxy-3-methylbutanoate = 3-methyl-2-oxobutanoate + H2O. It carries out the reaction (2R,3R)-2,3-dihydroxy-3-methylpentanoate = (S)-3-methyl-2-oxopentanoate + H2O. Its pathway is amino-acid biosynthesis; L-isoleucine biosynthesis; L-isoleucine from 2-oxobutanoate: step 3/4. It functions in the pathway amino-acid biosynthesis; L-valine biosynthesis; L-valine from pyruvate: step 3/4. Functionally, functions in the biosynthesis of branched-chain amino acids. Catalyzes the dehydration of (2R,3R)-2,3-dihydroxy-3-methylpentanoate (2,3-dihydroxy-3-methylvalerate) into 2-oxo-3-methylpentanoate (2-oxo-3-methylvalerate) and of (2R)-2,3-dihydroxy-3-methylbutanoate (2,3-dihydroxyisovalerate) into 2-oxo-3-methylbutanoate (2-oxoisovalerate), the penultimate precursor to L-isoleucine and L-valine, respectively. In Campylobacter jejuni subsp. doylei (strain ATCC BAA-1458 / RM4099 / 269.97), this protein is Dihydroxy-acid dehydratase.